The following is a 777-amino-acid chain: NAD(P)H-quinone oxidoreductase subunit 5, chloroplastic (777 aa).

Helical transmembrane passes span 9 to 29 (WIIP…LLLF), 40 to 60 (WSFP…YLSI), 89 to 109 (IDPL…LVLF), 125 to 145 (FAYL…SNLI), 147 to 167 (IYIF…FWFT), 185 to 205 (GDFG…SFEF), 220 to 240 (NQVH…GAVA), 259 to 279 (TPIS…FLVA), 290 to 312 (YIMN…LALA), 328 to 348 (LGYM…FHLI), 355 to 375 (ALLF…VGYS), 397 to 417 (TAFL…CFWS), 426 to 446 (WLYS…TAFY), 550 to 570 (LFSL…GIPF), 604 to 624 (FVTN…IATF), and 731 to 751 (IFIF…FFVL).

The protein belongs to the complex I subunit 5 family. As to quaternary structure, NDH is composed of at least 16 different subunits, 5 of which are encoded in the nucleus.

Its subcellular location is the plastid. It is found in the chloroplast thylakoid membrane. The catalysed reaction is a plastoquinone + NADH + (n+1) H(+)(in) = a plastoquinol + NAD(+) + n H(+)(out). It carries out the reaction a plastoquinone + NADPH + (n+1) H(+)(in) = a plastoquinol + NADP(+) + n H(+)(out). Its function is as follows. NDH shuttles electrons from NAD(P)H:plastoquinone, via FMN and iron-sulfur (Fe-S) centers, to quinones in the photosynthetic chain and possibly in a chloroplast respiratory chain. The immediate electron acceptor for the enzyme in this species is believed to be plastoquinone. Couples the redox reaction to proton translocation, and thus conserves the redox energy in a proton gradient. The protein is NAD(P)H-quinone oxidoreductase subunit 5, chloroplastic (ndhF) of Oenothera elata subsp. hookeri (Hooker's evening primrose).